The sequence spans 724 residues: MRFFVSCAKGLEYLLVDEVLALGAVGATATVAGVNVEGGLCDAQRLVLWSRLASRVLWPLAAFACADEDALYAGVAALPWVEHVLPGQTLAVDAHVSGEAITHARYAAQRVKDAVVDTLRDAGVVRPSVDVEHPDVRLNLSLRKGRATLSVDLGGRALHHRGWRQAPHAASLKEHLAAAVLLRAGWAKVYAEGGGLLDPMCGSGTLLIEGALMVADVAPGLSRYADPDAISHVSVAERPVLLPSRWRGFDVVAWEALVVDAQQRARRGLAELRPVLHGSDIDPRALGAAFANARAAGVQDAIEFVVAGIDVLPAVFEPHGVVVCNAPYDVRLAANPGLYRHLGDALRRVVPRWRAALVCGSSPLAFATGLRAGKKYQFFNGALECVLIVCDPVVPLAREAGGAQALSEGAQMVANRLRKNVQRLKKWRMRAGVECYRVYDADLPEYAAAIDVYQEVDGARRLFLHVQEYAAPASIPEGDVRRRRHELLAAVRAVFDVSVAQVALKTRQRGKGGSQYGCFAQRGEFFHVCEHGALLRVNLFDYLDTGLFLDHRPLRARMAREAVGKRFLNVFCYTGVASVEAAVAGAAATTSVDLSSTYLHWCTDNFALNGQGGVRHRLVQADALAWLEAERGQYDVIFCDPPTFSNSARADDFDVQRDHVRLLRAAVARLTPGGVLYFSNNFRRFRLDVDAVAAFAQCEEISPVTIDLDFSRNTRIHRTWLLWR.

In terms of domain architecture, THUMP spans aspartate 42–leucine 153.

It belongs to the methyltransferase superfamily. RlmKL family.

The protein resides in the cytoplasm. It catalyses the reaction guanosine(2445) in 23S rRNA + S-adenosyl-L-methionine = N(2)-methylguanosine(2445) in 23S rRNA + S-adenosyl-L-homocysteine + H(+). The catalysed reaction is guanosine(2069) in 23S rRNA + S-adenosyl-L-methionine = N(2)-methylguanosine(2069) in 23S rRNA + S-adenosyl-L-homocysteine + H(+). In terms of biological role, specifically methylates the guanine in position 2445 (m2G2445) and the guanine in position 2069 (m7G2069) of 23S rRNA. The polypeptide is Ribosomal RNA large subunit methyltransferase K/L (Xylella fastidiosa (strain 9a5c)).